Here is a 366-residue protein sequence, read N- to C-terminus: Galactoside alpha-(1,2)-fucosyltransferase 1 (366 aa).

The Cytoplasmic segment spans residues 1 to 8; sequence MWPLSHRH. The chain crosses the membrane as a helical; Signal-anchor for type II membrane protein span at residues 9–25; the sequence is LCLAFLLVCVLSAISFF. The Lumenal portion of the chain corresponds to 26–366; sequence LHIHQDSIRH…LSPLWTLAEP (341 aa). Residues asparagine 66, asparagine 302, and asparagine 328 are each glycosylated (N-linked (GlcNAc...) asparagine).

This sequence belongs to the glycosyltransferase 11 family.

It localises to the golgi apparatus. The protein resides in the golgi stack membrane. The enzyme catalyses a beta-D-galactosyl-(1-&gt;4)-N-acetyl-beta-D-glucosaminyl derivative + GDP-beta-L-fucose = an alpha-L-Fuc-(1-&gt;2)-beta-D-Gal-(1-&gt;4)-beta-D-GlcNAc derivative + GDP + H(+). It carries out the reaction a ganglioside GA1 + GDP-beta-L-fucose = a ganglioside Fuc-GA1 + GDP + H(+). It catalyses the reaction a beta-D-Gal-(1-&gt;3)-beta-D-GlcNAc-(1-&gt;3)-beta-D-Gal-(1-&gt;4)-beta-D-Glc-(1&lt;-&gt;1')-Cer(d18:1(4E)) + GDP-beta-L-fucose = alpha-L-fucosyl-(1-&gt;2)- beta-D-galactosyl-(1-&gt;3)-N-acetyl-beta-D-glucosaminyl-(1-&gt;3)-beta-D-galactosyl-(1-&gt;4)-beta-D-glucosyl-(1&lt;-&gt;1')-N-acylsphing-4-enine + GDP + H(+). The catalysed reaction is a neolactoside nLc4Cer(d18:1(4E)) + GDP-beta-L-fucose = a neolactoside IV(2)-alpha-Fuc-nLc4Cer(d18:1(4E)) + GDP + H(+). The enzyme catalyses a ganglioside GM1 + GDP-beta-L-fucose = a ganglioside Fuc-GM1 + GDP + H(+). It carries out the reaction beta-D-galactosyl-(1-&gt;3)-N-acetyl-D-galactosamine + GDP-beta-L-fucose = alpha-L-fucosyl-(1-&gt;2)-beta-D-galactosyl-(1-&gt;3)-N-acetyl-D-galactosamine + GDP + H(+). The protein operates within protein modification; protein glycosylation. Functionally, catalyzes the transfer of L-fucose, from a guanosine diphosphate-beta-L-fucose, to the terminal galactose residue of glycoconjugates through an alpha(1,2) linkage leading to H antigen synthesis that is an intermediate substrate in the synthesis of ABO blood group antigens. H antigen is essential for maturation of the glomerular layer of the main olfactory bulb, in cell migration and early cell-cell contacts during tumor associated angiogenesis. Preferentially fucosylates soluble lactose and to a lesser extent fucosylates glycolipids gangliosides GA1 and GM1a. This Aotus nancymaae (Ma's night monkey) protein is Galactoside alpha-(1,2)-fucosyltransferase 1.